We begin with the raw amino-acid sequence, 295 residues long: Small ribosomal subunit protein uS2 (295 aa).

Ser-2 is modified (N-acetylserine). Ser-43 carries the post-translational modification Phosphoserine. Lys-52 is subject to N6-acetyllysine. Positions 54–113 (TWEKLLLAARAIVAIENPADVSVISSRNTGQRAVLKFAAATGATPIAGRFTPGTFTNQIQ) are interaction with PPP1R16B. Residue Lys-89 is modified to N6-acetyllysine; alternate. Residue Lys-89 forms a Glycyl lysine isopeptide (Lys-Gly) (interchain with G-Cter in SUMO2); alternate linkage. Residue Thr-97 is modified to Phosphothreonine. Laminin-binding regions lie at residues 161–180 (IPCN…MLAR) and 205–229 (RDPE…EFQG). 5 [DE]-W-[ST] repeats span residues 230–232 (EWT), 247–249 (DWS), 266–268 (DWS), 275–277 (DWS), and 293–295 (EWS). The tract at residues 242–295 (QPEVADWSEGVQVPSVPIQQFPTEDWSAQPATEDWSAAPTAQATEWVGTTTEWS) is laminin-binding. A disordered region spans residues 266–295 (DWSAQPATEDWSAAPTAQATEWVGTTTEWS). A compositionally biased stretch (polar residues) spans 280-295 (PTAQATEWVGTTTEWS).

Belongs to the universal ribosomal protein uS2 family. As to quaternary structure, monomer (37LRP) and homodimer (67LR). Component of the small ribosomal subunit. Mature ribosomes consist of a small (40S) and a large (60S) subunit. The 40S subunit contains about 33 different proteins and 1 molecule of RNA (18S). The 60S subunit contains about 49 different proteins and 3 molecules of RNA (28S, 5.8S and 5S). Interacts with RPS21. Interacts with several laminins including at least LAMB1. Interacts with MDK. The mature dimeric form interacts with PPP1R16B (via its fourth ankyrin repeat). Interacts with PPP1CA only in the presence of PPP1R16B. In terms of processing, acylated. Acylation may be a prerequisite for conversion of the monomeric 37 kDa laminin receptor precursor (37LRP) to the mature dimeric 67 kDa laminin receptor (67LR), and may provide a mechanism for membrane association. Cleaved by stromelysin-3 (ST3) at the cell surface. Cleavage by stromelysin-3 may be a mechanism to alter cell-extracellular matrix interactions.

Its subcellular location is the cell membrane. The protein localises to the cytoplasm. It is found in the nucleus. Required for the assembly and/or stability of the 40S ribosomal subunit. Required for the processing of the 20S rRNA-precursor to mature 18S rRNA in a late step of the maturation of 40S ribosomal subunits. Also functions as a cell surface receptor for laminin. Plays a role in cell adhesion to the basement membrane and in the consequent activation of signaling transduction pathways. May play a role in cell fate determination and tissue morphogenesis. Also acts as a receptor for several other ligands, including the pathogenic prion protein, viruses, and bacteria. Acts as a PPP1R16B-dependent substrate of PPP1CA. The sequence is that of Small ribosomal subunit protein uS2 from Oryctolagus cuniculus (Rabbit).